Here is a 704-residue protein sequence, read N- to C-terminus: Elongation factor G (704 aa).

In terms of domain architecture, tr-type G spans 8–290 (EKYRNIGICA…GVVRYLPAPN (283 aa)). GTP contacts are provided by residues 17–24 (AHVDAGKT), 88–92 (DTPGH), and 142–145 (NKMD).

The protein belongs to the TRAFAC class translation factor GTPase superfamily. Classic translation factor GTPase family. EF-G/EF-2 subfamily.

The protein resides in the cytoplasm. Catalyzes the GTP-dependent ribosomal translocation step during translation elongation. During this step, the ribosome changes from the pre-translocational (PRE) to the post-translocational (POST) state as the newly formed A-site-bound peptidyl-tRNA and P-site-bound deacylated tRNA move to the P and E sites, respectively. Catalyzes the coordinated movement of the two tRNA molecules, the mRNA and conformational changes in the ribosome. The protein is Elongation factor G of Francisella tularensis subsp. holarctica (strain FTNF002-00 / FTA).